The sequence spans 125 residues: Protein ApaG (125 aa).

The ApaG domain maps to Met-1–His-125.

The polypeptide is Protein ApaG (Yersinia pseudotuberculosis serotype IB (strain PB1/+)).